A 463-amino-acid chain; its full sequence is tRNA-2-methylthio-N(6)-dimethylallyladenosine synthase (463 aa).

One can recognise an MTTase N-terminal domain in the interval 5–125; sequence RKLHIKSYGC…LPQLLAKAEQ (121 aa). Positions 14, 50, 88, 166, 170, and 173 each coordinate [4Fe-4S] cluster. The 233-residue stretch at 152-384 folds into the Radical SAM core domain; the sequence is RARGISAFVT…QQLIDQQQSA (233 aa). The region spanning 387–449 is the TRAM domain; the sequence is KAAIGRTVEV…RYSLLGELAS (63 aa).

This sequence belongs to the methylthiotransferase family. MiaB subfamily. As to quaternary structure, monomer. The cofactor is [4Fe-4S] cluster.

Its subcellular location is the cytoplasm. It catalyses the reaction N(6)-dimethylallyladenosine(37) in tRNA + (sulfur carrier)-SH + AH2 + 2 S-adenosyl-L-methionine = 2-methylsulfanyl-N(6)-dimethylallyladenosine(37) in tRNA + (sulfur carrier)-H + 5'-deoxyadenosine + L-methionine + A + S-adenosyl-L-homocysteine + 2 H(+). In terms of biological role, catalyzes the methylthiolation of N6-(dimethylallyl)adenosine (i(6)A), leading to the formation of 2-methylthio-N6-(dimethylallyl)adenosine (ms(2)i(6)A) at position 37 in tRNAs that read codons beginning with uridine. This Rhodopseudomonas palustris (strain TIE-1) protein is tRNA-2-methylthio-N(6)-dimethylallyladenosine synthase.